The primary structure comprises 222 residues: Ribosomal RNA small subunit methyltransferase G (222 aa).

S-adenosyl-L-methionine contacts are provided by residues Gly80, Leu85, 131-132 (VE), and Arg148.

This sequence belongs to the methyltransferase superfamily. RNA methyltransferase RsmG family.

It localises to the cytoplasm. The catalysed reaction is guanosine(527) in 16S rRNA + S-adenosyl-L-methionine = N(7)-methylguanosine(527) in 16S rRNA + S-adenosyl-L-homocysteine. In terms of biological role, specifically methylates the N7 position of guanine in position 527 of 16S rRNA. The chain is Ribosomal RNA small subunit methyltransferase G from Polynucleobacter asymbioticus (strain DSM 18221 / CIP 109841 / QLW-P1DMWA-1) (Polynucleobacter necessarius subsp. asymbioticus).